A 281-amino-acid chain; its full sequence is Proteasome subunit beta (281 aa).

Residues 1–53 constitute a propeptide, removed in mature form; by autocatalysis; it reads MEANTRSTGRLPAAFLTPGSSSFMDFLSDHQPELLPGKRQLPPTQGVIEAPHG. Thr54 serves as the catalytic Nucleophile.

Belongs to the peptidase T1B family. As to quaternary structure, the 20S proteasome core is composed of 14 alpha and 14 beta subunits that assemble into four stacked heptameric rings, resulting in a barrel-shaped structure. The two inner rings, each composed of seven catalytic beta subunits, are sandwiched by two outer rings, each composed of seven alpha subunits. The catalytic chamber with the active sites is on the inside of the barrel. Has a gated structure, the ends of the cylinder being occluded by the N-termini of the alpha-subunits. Is capped by the proteasome-associated ATPase, ARC.

Its subcellular location is the cytoplasm. It carries out the reaction Cleavage of peptide bonds with very broad specificity.. It functions in the pathway protein degradation; proteasomal Pup-dependent pathway. With respect to regulation, the formation of the proteasomal ATPase ARC-20S proteasome complex, likely via the docking of the C-termini of ARC into the intersubunit pockets in the alpha-rings, may trigger opening of the gate for substrate entry. Interconversion between the open-gate and close-gate conformations leads to a dynamic regulation of the 20S proteasome proteolysis activity. Component of the proteasome core, a large protease complex with broad specificity involved in protein degradation. This Streptomyces scabiei (strain 87.22) protein is Proteasome subunit beta.